A 322-amino-acid polypeptide reads, in one-letter code: Undecaprenyl-phosphate 4-deoxy-4-formamido-L-arabinose transferase (322 aa).

Residues 1-235 (MFEIHPVKKV…TCLTTTPLRM (235 aa)) lie on the Cytoplasmic side of the membrane. Residues 236–256 (LSLLGSIIAIGGFSIAVLLVI) form a helical membrane-spanning segment. Residues 257 to 269 (LRLTFGPQWAAEG) are Periplasmic-facing. The helical transmembrane segment at 270–290 (VFMLFAVLFTFIGAQFIGMGL) threads the bilayer. The Cytoplasmic portion of the chain corresponds to 291–322 (LGEYIGRIYTDVRARPRYFVQQVIRPSSKENE).

This sequence belongs to the glycosyltransferase 2 family.

Its subcellular location is the cell inner membrane. It catalyses the reaction UDP-4-deoxy-4-formamido-beta-L-arabinose + di-trans,octa-cis-undecaprenyl phosphate = 4-deoxy-4-formamido-alpha-L-arabinopyranosyl di-trans,octa-cis-undecaprenyl phosphate + UDP. It functions in the pathway glycolipid biosynthesis; 4-amino-4-deoxy-alpha-L-arabinose undecaprenyl phosphate biosynthesis; 4-amino-4-deoxy-alpha-L-arabinose undecaprenyl phosphate from UDP-4-deoxy-4-formamido-beta-L-arabinose and undecaprenyl phosphate: step 1/2. The protein operates within bacterial outer membrane biogenesis; lipopolysaccharide biosynthesis. Its function is as follows. Catalyzes the transfer of 4-deoxy-4-formamido-L-arabinose from UDP to undecaprenyl phosphate. The modified arabinose is attached to lipid A and is required for resistance to polymyxin and cationic antimicrobial peptides. The sequence is that of Undecaprenyl-phosphate 4-deoxy-4-formamido-L-arabinose transferase from Escherichia coli (strain SMS-3-5 / SECEC).